Here is a 227-residue protein sequence, read N- to C-terminus: tRNA (guanine-N(1)-)-methyltransferase (227 aa).

Residues Gly107 and 127–132 (LGDFIL) contribute to the S-adenosyl-L-methionine site.

This sequence belongs to the RNA methyltransferase TrmD family. Homodimer.

The protein resides in the cytoplasm. It carries out the reaction guanosine(37) in tRNA + S-adenosyl-L-methionine = N(1)-methylguanosine(37) in tRNA + S-adenosyl-L-homocysteine + H(+). In terms of biological role, specifically methylates guanosine-37 in various tRNAs. This Mesomycoplasma hyopneumoniae (strain 7448) (Mycoplasma hyopneumoniae) protein is tRNA (guanine-N(1)-)-methyltransferase.